The primary structure comprises 143 residues: Large ribosomal subunit protein uL15 (143 aa).

Residues M1–R48 form a disordered region. Residues G11–G20 show a composition bias toward basic residues. Residues R21–S31 are compositionally biased toward gly residues.

This sequence belongs to the universal ribosomal protein uL15 family. In terms of assembly, part of the 50S ribosomal subunit.

Functionally, binds to the 23S rRNA. This is Large ribosomal subunit protein uL15 from Baumannia cicadellinicola subsp. Homalodisca coagulata.